We begin with the raw amino-acid sequence, 200 residues long: Small ribosomal subunit protein uS4 (200 aa).

Residues 22 to 43 (TGKELERRPYAPGQHGPTQRKK) form a disordered region. The region spanning 92–170 (QRLDNIVYRL…VPEYVTFDAE (79 aa)) is the S4 RNA-binding domain.

The protein belongs to the universal ribosomal protein uS4 family. In terms of assembly, part of the 30S ribosomal subunit. Contacts protein S5. The interaction surface between S4 and S5 is involved in control of translational fidelity.

Functionally, one of the primary rRNA binding proteins, it binds directly to 16S rRNA where it nucleates assembly of the body of the 30S subunit. Its function is as follows. With S5 and S12 plays an important role in translational accuracy. The sequence is that of Small ribosomal subunit protein uS4 from Listeria innocua serovar 6a (strain ATCC BAA-680 / CLIP 11262).